Consider the following 505-residue polypeptide: Pleckstrin homology domain-containing family D member 1 (505 aa).

The PH domain occupies 28 to 136 (KVQLYGVLWK…WLEMLQESGK (109 aa)). Residues 146–391 (EAMIKSLEAQ…KVRNKEKEER (246 aa)) adopt a coiled-coil conformation. The interval 264 to 284 (DKNQPQPLTNQSEQPPASDGL) is disordered. Residues 267 to 278 (QPQPLTNQSEQP) are compositionally biased toward polar residues. Position 502 is an omega-N-methylarginine (R502).

It belongs to the PLEKHD1 family.

In Mus musculus (Mouse), this protein is Pleckstrin homology domain-containing family D member 1 (Plekhd1).